The primary structure comprises 812 residues: Leucine--tRNA ligase (812 aa).

Residues 40-51 (SYPSGSNLHAGH) carry the 'HIGH' region motif. A 'KMSKS' region motif is present at residues 572 to 576 (KMSKS). Lys-575 contacts ATP.

The protein belongs to the class-I aminoacyl-tRNA synthetase family.

Its subcellular location is the cytoplasm. It carries out the reaction tRNA(Leu) + L-leucine + ATP = L-leucyl-tRNA(Leu) + AMP + diphosphate. This chain is Leucine--tRNA ligase, found in Clostridium tetani (strain Massachusetts / E88).